The following is a 159-amino-acid chain: Dihydrofolate reductase (159 aa).

The 156-residue stretch at 2-157 (TLSILVAHDL…IPHTFLHLIR (156 aa)) folds into the DHFR domain. Position 6 to 8 (6 to 8 (LVA)) interacts with substrate. Residues 7-8 (VA) and 15-20 (IGFENQ) contribute to the NADP(+) site. A substrate-binding site is contributed by Asp-28. NADP(+) is bound at residue 44–47 (GRKT). Substrate is bound at residue Arg-58. NADP(+) contacts are provided by residues 63 to 66 (LTSD) and 93 to 98 (FGGQIL). Residue Thr-112 coordinates substrate.

The protein belongs to the dihydrofolate reductase family.

It catalyses the reaction (6S)-5,6,7,8-tetrahydrofolate + NADP(+) = 7,8-dihydrofolate + NADPH + H(+). It participates in cofactor biosynthesis; tetrahydrofolate biosynthesis; 5,6,7,8-tetrahydrofolate from 7,8-dihydrofolate: step 1/1. Its function is as follows. Key enzyme in folate metabolism. Catalyzes an essential reaction for de novo glycine and purine synthesis, and for DNA precursor synthesis. This Staphylococcus aureus (strain MW2) protein is Dihydrofolate reductase (folA).